A 30-amino-acid polypeptide reads, in one-letter code: Superoxide dismutase [Cu-Zn] 1 (30 aa).

The protein belongs to the Cu-Zn superoxide dismutase family. Cu cation serves as cofactor. Requires Zn(2+) as cofactor. As to expression, expressed in fruits, leaves and pollen grains.

It is found in the cytoplasm. Its subcellular location is the endoplasmic reticulum. The catalysed reaction is 2 superoxide + 2 H(+) = H2O2 + O2. With respect to regulation, inhibited by KCN and H(2)O(2). In terms of biological role, destroys radicals which are normally produced within the cells and which are toxic to biological systems. Probably involved in the protection against oxidative stress during pollen development. This is Superoxide dismutase [Cu-Zn] 1 from Olea europaea (Common olive).